Here is a 339-residue protein sequence, read N- to C-terminus: Aspartate carbamoyltransferase catalytic subunit (339 aa).

Residues arginine 59 and threonine 60 each coordinate carbamoyl phosphate. Residue lysine 87 coordinates L-aspartate. Carbamoyl phosphate is bound by residues arginine 109, histidine 142, and glutamine 145. Residues arginine 182 and arginine 253 each contribute to the L-aspartate site. Glycine 294 and proline 295 together coordinate carbamoyl phosphate.

Belongs to the aspartate/ornithine carbamoyltransferase superfamily. ATCase family. As to quaternary structure, heterododecamer (2C3:3R2) of six catalytic PyrB chains organized as two trimers (C3), and six regulatory PyrI chains organized as three dimers (R2).

It carries out the reaction carbamoyl phosphate + L-aspartate = N-carbamoyl-L-aspartate + phosphate + H(+). It functions in the pathway pyrimidine metabolism; UMP biosynthesis via de novo pathway; (S)-dihydroorotate from bicarbonate: step 2/3. Functionally, catalyzes the condensation of carbamoyl phosphate and aspartate to form carbamoyl aspartate and inorganic phosphate, the committed step in the de novo pyrimidine nucleotide biosynthesis pathway. This chain is Aspartate carbamoyltransferase catalytic subunit, found in Prochlorococcus marinus (strain NATL2A).